The chain runs to 156 residues: Endoribonuclease YbeY (156 aa).

Positions 117, 121, and 127 each coordinate Zn(2+).

This sequence belongs to the endoribonuclease YbeY family. Zn(2+) is required as a cofactor.

It is found in the cytoplasm. Single strand-specific metallo-endoribonuclease involved in late-stage 70S ribosome quality control and in maturation of the 3' terminus of the 16S rRNA. This Herminiimonas arsenicoxydans protein is Endoribonuclease YbeY.